The sequence spans 571 residues: Phosphoenolpyruvate-protein phosphotransferase (571 aa).

Residue H189 is the Tele-phosphohistidine intermediate of the active site. Phosphoenolpyruvate-binding residues include R296 and R332. 2 residues coordinate Mg(2+): E431 and D455. Residues 454-455 (ND) and R465 each bind phosphoenolpyruvate. The active-site Proton donor is C502.

The protein belongs to the PEP-utilizing enzyme family. In terms of assembly, homodimer. It depends on Mg(2+) as a cofactor.

It localises to the cytoplasm. The catalysed reaction is L-histidyl-[protein] + phosphoenolpyruvate = N(pros)-phospho-L-histidyl-[protein] + pyruvate. Functionally, general (non sugar-specific) component of the phosphoenolpyruvate-dependent sugar phosphotransferase system (sugar PTS). This major carbohydrate active-transport system catalyzes the phosphorylation of incoming sugar substrates concomitantly with their translocation across the cell membrane. Enzyme I transfers the phosphoryl group from phosphoenolpyruvate (PEP) to the phosphoryl carrier protein (HPr). This is Phosphoenolpyruvate-protein phosphotransferase (ptsI) from Buchnera aphidicola subsp. Acyrthosiphon pisum (strain APS) (Acyrthosiphon pisum symbiotic bacterium).